A 351-amino-acid chain; its full sequence is UDP-3-O-acylglucosamine N-acyltransferase (351 aa).

Histidine 257 acts as the Proton acceptor in catalysis.

It belongs to the transferase hexapeptide repeat family. LpxD subfamily. Homotrimer.

It catalyses the reaction a UDP-3-O-[(3R)-3-hydroxyacyl]-alpha-D-glucosamine + a (3R)-hydroxyacyl-[ACP] = a UDP-2-N,3-O-bis[(3R)-3-hydroxyacyl]-alpha-D-glucosamine + holo-[ACP] + H(+). Its pathway is bacterial outer membrane biogenesis; LPS lipid A biosynthesis. Functionally, catalyzes the N-acylation of UDP-3-O-acylglucosamine using 3-hydroxyacyl-ACP as the acyl donor. Is involved in the biosynthesis of lipid A, a phosphorylated glycolipid that anchors the lipopolysaccharide to the outer membrane of the cell. The chain is UDP-3-O-acylglucosamine N-acyltransferase from Methylorubrum extorquens (strain PA1) (Methylobacterium extorquens).